The following is a 670-amino-acid chain: Serine/threonine-rich protein adg2 (670 aa).

Positions 1 to 19 are cleaved as a signal peptide; that stretch reads MRRLTISGLLISLAKLCAG. N-linked (GlcNAc...) asparagine glycans are attached at residues asparagine 77, asparagine 159, asparagine 204, asparagine 224, asparagine 274, asparagine 297, asparagine 327, asparagine 351, asparagine 370, asparagine 381, asparagine 405, asparagine 424, asparagine 435, asparagine 459, asparagine 478, asparagine 489, and asparagine 513. The disordered stretch occupies residues 526 to 651; sequence GSVSSFSSSP…MSLPPSAGSS (126 aa).

It is found in the secreted. Its subcellular location is the endoplasmic reticulum. The polypeptide is Serine/threonine-rich protein adg2 (adg2) (Schizosaccharomyces pombe (strain 972 / ATCC 24843) (Fission yeast)).